Consider the following 218-residue polypeptide: UPF0301 protein RPB_4502 (218 aa).

The disordered stretch occupies residues methionine 1 to glutamine 26.

The protein belongs to the UPF0301 (AlgH) family.

The polypeptide is UPF0301 protein RPB_4502 (Rhodopseudomonas palustris (strain HaA2)).